Reading from the N-terminus, the 494-residue chain is Cysteine--tRNA ligase (494 aa).

Cys29 is a Zn(2+) binding site. The 'HIGH' region signature appears at 31-41 (VTVYDHCHIGH). Residues Cys209, His234, and Glu238 each contribute to the Zn(2+) site. Residues 266 to 270 (KMSKS) carry the 'KMSKS' region motif. Lys269 lines the ATP pocket.

The protein belongs to the class-I aminoacyl-tRNA synthetase family. In terms of assembly, monomer. It depends on Zn(2+) as a cofactor.

The protein localises to the cytoplasm. It catalyses the reaction tRNA(Cys) + L-cysteine + ATP = L-cysteinyl-tRNA(Cys) + AMP + diphosphate. The protein is Cysteine--tRNA ligase of Geotalea uraniireducens (strain Rf4) (Geobacter uraniireducens).